We begin with the raw amino-acid sequence, 90 residues long: Small ribosomal subunit protein bS20 (90 aa).

A compositionally biased stretch (basic and acidic residues) spans 1 to 11; sequence MANIKSSEKDI. The segment at 1–29 is disordered; sequence MANIKSSEKDIRRTKRRNAANSQNRSRLR.

This sequence belongs to the bacterial ribosomal protein bS20 family.

In terms of biological role, binds directly to 16S ribosomal RNA. The polypeptide is Small ribosomal subunit protein bS20 (Leptospira borgpetersenii serovar Hardjo-bovis (strain JB197)).